A 565-amino-acid polypeptide reads, in one-letter code: Urocanate hydratase (565 aa).

Residues 58–59, Gln136, 182–184, Glu202, Arg207, 245–246, 266–270, 276–277, and Tyr325 contribute to the NAD(+) site; these read GG, GMG, NA, QTSAH, and YL. Cys413 is a catalytic residue. Gly495 is an NAD(+) binding site.

Belongs to the urocanase family. Requires NAD(+) as cofactor.

It localises to the cytoplasm. The enzyme catalyses 4-imidazolone-5-propanoate = trans-urocanate + H2O. Its pathway is amino-acid degradation; L-histidine degradation into L-glutamate; N-formimidoyl-L-glutamate from L-histidine: step 2/3. Catalyzes the conversion of urocanate to 4-imidazolone-5-propionate. The polypeptide is Urocanate hydratase (Vibrio cholerae serotype O1 (strain ATCC 39541 / Classical Ogawa 395 / O395)).